A 298-amino-acid polypeptide reads, in one-letter code: MSITFQSIIAKLHEFWSARGCLIAQPYDTEKGAGTMSPHTFLRAIGPEPWSVAYVEPCRRPTDGRYGENPNRFQHYYQYQVLIKPSPDNIQEIYLDSLRSLGIHPEDHDIRFVEDNWESPTLGAWGVGWEVWLDGMEITQFTYFQQCGGIDCRPVSIEITYGLERLAMYLQNVDAITKIQWNDQVNYGEIFLQNEIEQSTYNFEASTPDLLFNLFSLYEQEAKQLIERGLVIPSLDYVLKCSHSFNLLDARGVIAVAERTRYIGRIRNLAREVAQLYLQQRENLGFPLEPVQAALING.

It belongs to the class-II aminoacyl-tRNA synthetase family. Tetramer of two alpha and two beta subunits.

The protein resides in the cytoplasm. The enzyme catalyses tRNA(Gly) + glycine + ATP = glycyl-tRNA(Gly) + AMP + diphosphate. The sequence is that of Glycine--tRNA ligase alpha subunit from Gloeothece citriformis (strain PCC 7424) (Cyanothece sp. (strain PCC 7424)).